Here is a 925-residue protein sequence, read N- to C-terminus: MIKVFKDLKFLILITIILLNLKSINCKIIYGDSVSFERVLSPQLGKNITLPWGKDKVIHLCNPHGEESIPVLVSNNIPLGKLASNDENFLAIFGNQSFARLLAHFNCKKTEETCIRLRTDLPVFTSCLLIGSVDGFDHVTFNSSLSGVPTNMNSWNVDTVGKFSNNLTSAGRIIVKNDNNQISLGCFEEGDKNNLNYILMHPNNPIDTIDICYKSFNEESEYVLYGLVECGDTSKSSFSISGYVFFDKYYSSSRINNPPVAGQIVYIQQKNGVVYDLDGKRVNQTITDARGFYYFNNIPGGDYQVYITPSDPDTLYSPDVDSNLQDPYTNKATNGSIETYIYINGSGVVPVSKTNFDDIKLTSVYVIREMNIGILPKNISMEGLVFIDYNANGQMDTAVTNTSAQDKPYSGVRVQLLDENRVVRDVITGDDGIFSFPDVPYVSTGYIAVIYTPSGNVMTNYPFPPSPLAGEIINLEIVPNNILLVGLINNENYCQDSPLMAIICYANQGYNESHADDPVLITFPSNANKHLYNMPHGTVQHIATHKEIGSVYGVGVDRVNGDIYTSAFMKYYSGFGPSGTGAIYKSTTKNNDYQTSLYFDLNKAMNQEDYCGTDSHIYPMDNYDGGVEKVGKIAFGDLDIHNGSLYTIALATKELLRVSISDPRDFQLYNIYNPCIEEPDDWRPFALGLRHGNIIIGGVCSKESDSTNIPVGYIMEMSGNILLTVPMDFPRGCKSFGGSFCIPGEYSAWSSVYFESQPWISDLTMDGEDMIISIRDRGGDLDRDVGTYDMLRACFDGDQLILENSGICGGVPGAHLLPSGYFGTPDGINSGEYYNDNFYYPTDNDGHDNVASTSGVVIPGYHTLFGSSLDIDSVGQGTVKVWDNKNGLLLYGIGVYLQSNENPTNNFGKANGLGDMEPICYNYIK.

The first 26 residues, Met-1–Cys-26, serve as a signal peptide directing secretion. N-linked (GlcNAc...) asparagine glycans are attached at residues Asn-47, Asn-95, Asn-142, Asn-166, Asn-283, Asn-334, Asn-344, Asn-378, Asn-401, Asn-511, and Asn-642.

This sequence belongs to the serine-aspartate repeat-containing protein (SDr) family.

Its subcellular location is the secreted. The chain is Colossin-D (colD) from Dictyostelium discoideum (Social amoeba).